The chain runs to 1063 residues: TBC1 domain family member 31 (1063 aa).

WD repeat units lie at residues 33-74, 75-116, 117-157, 158-200, 201-248, 249-296, and 297-334; these read HNTS…LCGN, RFNL…TVTK, ELVS…LDTF, QRKR…CDTL, VCKY…AKQL, FRII…IQTC, and KLLFEIGSLDDGISSSVISPHGRYIASIMENGSLNIYS. The Rab-GAP TBC domain occupies 424-599; sequence EFPTKYRMFI…KLFDNVFSNH (176 aa). Residues 699–951 adopt a coiled-coil conformation; that stretch reads ELDYLRERQA…EAKKWEEAEE (253 aa). Residues 1050-1053 are mediates direct interaction with PJA2; it reads QAQN.

Interacts with PJA2; the interaction is direct and recruits PJA2 to centrosomes. Interacts with OFD1; regulates its activity in cilium assembly. Interacts with PRKACA.

It is found in the cytoplasm. The protein resides in the cytoskeleton. Its subcellular location is the microtubule organizing center. The protein localises to the centrosome. It localises to the centriolar satellite. It is found in the cilium basal body. Functionally, molecular adapter which is involved in cilium biogenesis. Part of a functional complex including OFD1 a centriolar protein involved in cilium assembly. Could regulate the cAMP-dependent phosphorylation of OFD1, and its subsequent ubiquitination by PJA2 which ultimately leads to its proteasomal degradation. The protein is TBC1 domain family member 31 of Bos taurus (Bovine).